Reading from the N-terminus, the 185-residue chain is Ribosome-recycling factor (185 aa).

The protein belongs to the RRF family.

It is found in the cytoplasm. Its function is as follows. Responsible for the release of ribosomes from messenger RNA at the termination of protein biosynthesis. May increase the efficiency of translation by recycling ribosomes from one round of translation to another. In Idiomarina loihiensis (strain ATCC BAA-735 / DSM 15497 / L2-TR), this protein is Ribosome-recycling factor.